We begin with the raw amino-acid sequence, 357 residues long: Protein BMRF2 (357 aa).

The Virion surface portion of the chain corresponds to 1 to 11 (MFSCKQHLSLG). At 12–32 (ACVFCLGLLASTPFIWCFVFA) the chain is embedded in the membrane. Topologically, residues 33 to 46 (NLLSLEIFSPWQTH) are intravirion. Over 47 to 67 (VYRLGFPTACLMAVLWTLVPA) the chain traverses the membrane. The Virion surface portion of the chain corresponds to 68–70 (KHA). Residues 71 to 91 (VRAVTPAIMLNIASALIFFSL) are membrane-embedded. The Intravirion portion of the chain corresponds to 92–98 (RVYSTST). The hydrophobic stretch at 99 to 121 (WVSAPCLFLANLPLLCLWPRLAI) threads the membrane. Residues 122-133 (EIVYICPAIHQR) are Virion surface-facing. Positions 134 to 154 (FFELGLLLACTIFALSVVSRA) form a transmembrane segment. Residues 155–158 (LEVS) are Intravirion-facing. The hydrophobic stretch at 159–179 (AVFMSPFFIFLALGSGSLAGA) threads the membrane. Residues 180–217 (RRNQIYTSGLERRRSIFCARGDHSVASLKETLHKCPWD) lie on the Virion surface side of the membrane. The short motif at 199-201 (RGD) is the Integrin binding site element. The hydrophobic stretch at 218–238 (LLAISALTVLVVCVMIVLHVH) threads the membrane. Over 239–240 (AE) the chain is Intravirion. A transmembrane span lies at residues 241-261 (VFFGLSRYLPLFLCGAMASGG). The Virion surface portion of the chain corresponds to 262–267 (LYLGHS). The segment at 268-288 (SIIACVMATLCTLSSVVVYFL) is a transmembrane helix. The Intravirion portion of the chain corresponds to 289–298 (HETLGPLGKT). The segment at 299-319 (VLFISIFVYYFSGVAALSAAM) is a transmembrane helix. Residues 320-335 (RYKLKKFVNGPLVHLR) are Virion surface-facing. The segment at 336–356 (VVYMCCFVFTFCEYLLVTFIK) is a transmembrane helix. A topological domain (intravirion) is located at residue Ser357.

This sequence belongs to the herpesviridae BMRF2 family. As to quaternary structure, interacts with BDLF2. Interacts with host beta1 integrin family. In terms of processing, extensively glycosylated by O-linked oligosaccharides.

It is found in the virion membrane. The protein resides in the host cell membrane. Functionally, facilitates virus attachment to oral epithelial cells by binding to host beta1 integrin family. Participates in rearrangement of cellular actin to increase intercellular contacts by binding BDLF2 and thereby promote virus cell-to-cell spreading. The protein is Protein BMRF2 of Homo sapiens (Human).